The primary structure comprises 135 residues: uncharacterized protein (135 aa).

The disordered stretch occupies residues 1-75 (MAAATETGQA…PPPRPPQRRC (75 aa)).

This is an uncharacterized protein from Homo sapiens (Human).